Here is a 180-residue protein sequence, read N- to C-terminus: Large ribosomal subunit protein uL6 (180 aa).

The protein belongs to the universal ribosomal protein uL6 family. Part of the 50S ribosomal subunit.

This protein binds to the 23S rRNA, and is important in its secondary structure. It is located near the subunit interface in the base of the L7/L12 stalk, and near the tRNA binding site of the peptidyltransferase center. This chain is Large ribosomal subunit protein uL6, found in Bdellovibrio bacteriovorus (strain ATCC 15356 / DSM 50701 / NCIMB 9529 / HD100).